The primary structure comprises 325 residues: Beta-1,3-galactosyltransferase brn (325 aa).

Topologically, residues 1–7 are cytoplasmic; it reads MQSKHRK. The helical; Signal-anchor for type II membrane protein transmembrane segment at 8–28 threads the bilayer; sequence LLLRCLLVLPLILLVDYCGLL. Residues 29–325 lie on the Lumenal side of the membrane; that stretch reads THLHELNFER…WNECRSANYA (297 aa). Residues asparagine 149 and asparagine 166 are each glycosylated (N-linked (GlcNAc...) asparagine).

The protein belongs to the glycosyltransferase 31 family.

It is found in the golgi apparatus membrane. The enzyme catalyses a ganglioside GM2 (d18:1(4E)) + UDP-alpha-D-galactose = a ganglioside GM1 (d18:1(4E)) + UDP + H(+). Its function is as follows. Neurogenic protein essential for the development and maintenance of epithelial structure. Required in the germline for establishing the follicular epithelium and for determining the dorsal-ventral polarity. Collaborates with Notch on the apical surface of follicle cells to mediate germline-follicle cell adhesion. Brn has a role in chorion formation. This is Beta-1,3-galactosyltransferase brn (brn) from Drosophila melanogaster (Fruit fly).